A 224-amino-acid chain; its full sequence is UPF0173 metal-dependent hydrolase EF_1371 (224 aa).

The protein belongs to the UPF0173 family.

The polypeptide is UPF0173 metal-dependent hydrolase EF_1371 (Enterococcus faecalis (strain ATCC 700802 / V583)).